The primary structure comprises 297 residues: Glycerol-3-phosphate dehydrogenase [NAD(P)+] (297 aa).

Residues W11, R33, and K79 each coordinate NADPH. Positions 79, 107, and 109 each coordinate sn-glycerol 3-phosphate. Residue A111 participates in NADPH binding. 5 residues coordinate sn-glycerol 3-phosphate: K161, D214, S224, R225, and N226. Catalysis depends on K161, which acts as the Proton acceptor. Position 225 (R225) interacts with NADPH. NADPH is bound by residues V249 and E251.

Belongs to the NAD-dependent glycerol-3-phosphate dehydrogenase family.

It is found in the cytoplasm. The catalysed reaction is sn-glycerol 3-phosphate + NAD(+) = dihydroxyacetone phosphate + NADH + H(+). It carries out the reaction sn-glycerol 3-phosphate + NADP(+) = dihydroxyacetone phosphate + NADPH + H(+). It participates in membrane lipid metabolism; glycerophospholipid metabolism. In terms of biological role, catalyzes the reduction of the glycolytic intermediate dihydroxyacetone phosphate (DHAP) to sn-glycerol 3-phosphate (G3P), the key precursor for phospholipid synthesis. This chain is Glycerol-3-phosphate dehydrogenase [NAD(P)+], found in Campylobacter jejuni subsp. jejuni serotype O:23/36 (strain 81-176).